A 52-amino-acid chain; its full sequence is Lantibiotic epidermin (52 aa).

Residues 1 to 30 constitute a propeptide that is removed on maturation; that stretch reads MEAVKEKNDLFNLDVKVNAKESNDSGAEPR. The lanthionine (Ser-Cys) cross-link spans 33-37; it reads SKFIC. The segment at residues 38 to 41 is a cross-link (beta-methyllanthionine (Thr-Cys)); it reads TPGC. Threonine 44 bears the (Z)-2,3-didehydrobutyrine mark. Residues 46–51 constitute a cross-link (lanthionine (Ser-Cys)); sequence SFNSYC. The segment at residues 49 to 52 is a cross-link (S-(2-aminovinyl)-D-cysteine (Ser-Cys)); the sequence is SYCC.

Belongs to the type A lantibiotic family. Maturation of lantibiotics involves the enzymatic conversion of Thr, and Ser into dehydrated AA and the formation of thioether bonds with cysteine. The C-terminal lanthionine undergoes decarboxylation. This is followed by membrane translocation and cleavage of the modified precursor. Post-translationally, the 2,3-didehydrobutyrine is determined to be the Z-isomer.

Lanthionine-containing peptide antibiotic (lantibiotic) active on Gram-positive bacteria. The bactericidal activity of lantibiotics is based on depolarization of energized bacterial cytoplasmic membranes, initiated by the formation of aqueous transmembrane pores. The chain is Lantibiotic epidermin (epiA) from Staphylococcus epidermidis.